Here is a 247-residue protein sequence, read N- to C-terminus: Homeobox protein BarH-like 1b (247 aa).

Disordered regions lie at residues 118 to 138 (RGKL…GRRS) and 197 to 247 (GGGL…SQEE). A DNA-binding region (homeobox) is located at residues 135–194 (GRRSRTVFTELQLMGLEKRFEKQKYLSTPDRIDLAESLGLSQLQVKTWYQNRRMKWKKIV). Basic and acidic residues predominate over residues 223–234 (EQERARDAEKPP).

Belongs to the BAR homeobox family. As to quaternary structure, interacts with serum response factor (SRF). Expressed in smooth muscle cells of the upper digestive organs and their attached arteries and to craniofacial structures.

The protein localises to the nucleus. Functionally, transcription factor which is involved with the serum response factor (SRF) in the smooth muscle cell-specific transcription of the beta-tropomyosin gene in the upper digestive organs and their attached arteries. The protein is Homeobox protein BarH-like 1b (BARX1B) of Gallus gallus (Chicken).